The primary structure comprises 244 residues: NAD(P)H-quinone oxidoreductase subunit K (244 aa).

The [4Fe-4S] cluster site is built by Cys-60, Cys-61, Cys-125, and Cys-156.

Belongs to the complex I 20 kDa subunit family. As to quaternary structure, NDH-1 can be composed of about 15 different subunits; different subcomplexes with different compositions have been identified which probably have different functions. [4Fe-4S] cluster serves as cofactor.

It localises to the cellular thylakoid membrane. It catalyses the reaction a plastoquinone + NADH + (n+1) H(+)(in) = a plastoquinol + NAD(+) + n H(+)(out). The catalysed reaction is a plastoquinone + NADPH + (n+1) H(+)(in) = a plastoquinol + NADP(+) + n H(+)(out). In terms of biological role, NDH-1 shuttles electrons from an unknown electron donor, via FMN and iron-sulfur (Fe-S) centers, to quinones in the respiratory and/or the photosynthetic chain. The immediate electron acceptor for the enzyme in this species is believed to be plastoquinone. Couples the redox reaction to proton translocation, and thus conserves the redox energy in a proton gradient. Cyanobacterial NDH-1 also plays a role in inorganic carbon-concentration. The sequence is that of NAD(P)H-quinone oxidoreductase subunit K from Synechococcus sp. (strain CC9902).